Reading from the N-terminus, the 190-residue chain is ATP synthase subunit b, chloroplastic (190 aa).

Residues 35-55 form a helical membrane-spanning segment; it reads LSVVLGVLIFFGKGVCASCLL.

The protein belongs to the ATPase B chain family. In terms of assembly, F-type ATPases have 2 components, F(1) - the catalytic core - and F(0) - the membrane proton channel. F(1) has five subunits: alpha(3), beta(3), gamma(1), delta(1), epsilon(1). F(0) has four main subunits: a(1), b(1), b'(1) and c(10-14). The alpha and beta chains form an alternating ring which encloses part of the gamma chain. F(1) is attached to F(0) by a central stalk formed by the gamma and epsilon chains, while a peripheral stalk is formed by the delta, b and b' chains.

It localises to the plastid. It is found in the chloroplast thylakoid membrane. Functionally, f(1)F(0) ATP synthase produces ATP from ADP in the presence of a proton or sodium gradient. F-type ATPases consist of two structural domains, F(1) containing the extramembraneous catalytic core and F(0) containing the membrane proton channel, linked together by a central stalk and a peripheral stalk. During catalysis, ATP synthesis in the catalytic domain of F(1) is coupled via a rotary mechanism of the central stalk subunits to proton translocation. Its function is as follows. Component of the F(0) channel, it forms part of the peripheral stalk, linking F(1) to F(0). This Coffea arabica (Arabian coffee) protein is ATP synthase subunit b, chloroplastic.